The sequence spans 315 residues: MAFPQPRPQAPQLPQHLWRTVDCQQGAVRAVRFNADGNYLLTCGSDKSLKLWSVSRGTLLKTYSGHGYEVLDADGSYDNSQLCSCSSDKTVILWDVASGQVTRKLRGHAGKVNCVQFNEEATVMLSGSIDGTVRCWDTRSRRMEPIQILDESQDGISSLKVSEHELLTGSVDGRVRRYDLRMGQLQVDYIGSPITCVCFSRDGQCTLSSSLDSTVRLLDKSTGEMLGEYSGHVNKGYKLDCCLTDKDTHVLSCSEDGHVYYWDLVEGSLTLKLPVGKAVVQSLSFHPTEPRLLTSMEGRVQVWGAEPEDAAENES.

WD repeat units lie at residues 23–62 (CQQG…LLKT), 65–104 (GHGY…VTRK), 107–146 (GHAG…MEPI), 151–188 (ESQD…LQVD), 189–228 (YIGS…MLGE), 233–272 (VNKG…LTLK), and 275–313 (VGKA…AAEN).

The protein belongs to the WD repeat MORG1 family.

The protein localises to the cytoplasm. Molecular scaffold protein for various multimeric protein complexes. Acts as a module in the assembly of a multicomponent scaffold for the ERK pathway, linking ERK responses to specific agonists. Also involved in response to hypoxia by acting as a negative regulator of HIF1A/HIF-1-alpha. This chain is WD repeat domain-containing protein 83 (wdr83), found in Danio rerio (Zebrafish).